Reading from the N-terminus, the 247-residue chain is CDP-diacylglycerol pyrophosphatase (247 aa).

The chain crosses the membrane as a helical span at residues I5–M22.

This sequence belongs to the Cdh family.

The protein localises to the cell inner membrane. The catalysed reaction is a CDP-1,2-diacyl-sn-glycerol + H2O = a 1,2-diacyl-sn-glycero-3-phosphate + CMP + 2 H(+). Its pathway is phospholipid metabolism; CDP-diacylglycerol degradation; phosphatidate from CDP-diacylglycerol: step 1/1. In Enterobacter sp. (strain 638), this protein is CDP-diacylglycerol pyrophosphatase.